The chain runs to 500 residues: Formate-nitrite transporter 3 (500 aa).

At 1 to 31 (MVLAASPEAYRKVIEYGIKKTKLRIDRLFLQ) the chain is on the cytoplasmic side. A helical membrane pass occupies residues 32–52 (AIMAGIYVGMAGHACTALAGA). Over 53–69 (YSTDPANPLAVSKATQK) the chain is Extracellular. A helical transmembrane segment spans residues 70–90 (FLYASLFPVAFIAIIFTGAEL). At 91 to 113 (FTGNTMTMLVCLLERRVTALQLC) the chain is on the cytoplasmic side. A helical transmembrane segment spans residues 114–134 (INWICSLVGNWAGALFAAYFL). The Extracellular portion of the chain corresponds to 135–164 (SYLPGVLQDPDHLHYLEDVAAHKTELSFLQ). A helical transmembrane segment spans residues 165–185 (CFCLAVGCNTFVCLAVWFVIA). Residues 186–192 (SDDAAGK) lie on the Cytoplasmic side of the membrane. The helical transmembrane segment at 193–213 (IMSMWFPIVSFCVAGYEHIIA) threads the bilayer. The Extracellular portion of the chain corresponds to 214-237 (NFYTLQCALMHGVGPGVGTVILKN). The chain crosses the membrane as a helical span at residues 238 to 258 (FIPTLLGNIVGGCGLVGAVYW). Over 259 to 500 (YNFYPTVCVV…ALEEHPASTI (242 aa)) the chain is Cytoplasmic. Residues 411–500 (PLRENSGVPS…ALEEHPASTI (90 aa)) are disordered. 2 stretches are compositionally biased toward basic and acidic residues: residues 428 to 444 (GRVR…RGGE) and 466 to 485 (FHPH…ETRV).

This sequence belongs to the FNT transporter (TC 1.A.16) family. As to quaternary structure, homopentamer.

It localises to the cell membrane. It catalyses the reaction (S)-lactate(in) + H(+)(in) = (S)-lactate(out) + H(+)(out). The catalysed reaction is formate(in) + H(+)(in) = formate(out) + H(+)(out). It carries out the reaction pyruvate(out) + H(+)(out) = pyruvate(in) + H(+)(in). The enzyme catalyses acetate(out) + H(+)(out) = acetate(in) + H(+)(in). With respect to regulation, inhibited by p-chloromercuribenzene sulfonate (pCMBS). Methyl methanethiosulfonate (MMTS) inhibits L-lactate but not formate transport. Inhibited by the Malaria Box compound MMV007839. Inhibited by BH-296, BH-317, BH-326 and BH-388 compounds. Monocarboxylate-proton symporter; active in acidic-to-neutral pH range. Transports L-lactate and formate. This chain is Formate-nitrite transporter 3, found in Toxoplasma gondii (strain ATCC 50611 / Me49).